A 640-amino-acid polypeptide reads, in one-letter code: 1-deoxy-D-xylulose-5-phosphate synthase (640 aa).

Thiamine diphosphate is bound by residues His-78 and 119-121 (GHS). Asp-151 contributes to the Mg(2+) binding site. Residues 152–153 (GA), Asn-180, Tyr-289, and Glu-371 each bind thiamine diphosphate. Residue Asn-180 coordinates Mg(2+).

This sequence belongs to the transketolase family. DXPS subfamily. In terms of assembly, homodimer. Mg(2+) serves as cofactor. It depends on thiamine diphosphate as a cofactor.

It carries out the reaction D-glyceraldehyde 3-phosphate + pyruvate + H(+) = 1-deoxy-D-xylulose 5-phosphate + CO2. It functions in the pathway metabolic intermediate biosynthesis; 1-deoxy-D-xylulose 5-phosphate biosynthesis; 1-deoxy-D-xylulose 5-phosphate from D-glyceraldehyde 3-phosphate and pyruvate: step 1/1. Functionally, catalyzes the acyloin condensation reaction between C atoms 2 and 3 of pyruvate and glyceraldehyde 3-phosphate to yield 1-deoxy-D-xylulose-5-phosphate (DXP). The protein is 1-deoxy-D-xylulose-5-phosphate synthase of Bartonella quintana (strain Toulouse) (Rochalimaea quintana).